The following is a 378-amino-acid chain: MAVVDVHRFAESITCHAWSPDLSMVALCPNNTEVHIYKSLSQDHWERLHVLQKHDQIVSGIDWSSKSNKIVTVSHDRNSYVWSLEGAEWVPTLVILRLNRAALCVQWSPKENKFAVGSGAKTVCICYYEQENNWWVSKLIRKRHESSVTSVAWHPNNVLLATTSTDGKCRVFSTFIKGVDTKDSKAGSPAETKFGEQILQLDLSYSWAFGVKWSPSGNTLAYVGHSSMIYFVDDVGPSPLAQSVAFRDLPLRDVLFISEKMVIGVGYDSNPMVFASDDTGIWSFIRYIGEKKAASSNSSYSSQFSEAFGKFYGSQSKSTTANDASESRGGVHDNCINSIVSLSKAGSPKVMRFSTSGLDGKVAIWDLENMEQELGNQF.

7 WD repeats span residues 8–47 (RFAE…HWER), 53–92 (KHDQ…WVPT), 97–138 (RLNR…WVSK), 143–182 (RHES…VDTK), 203–242 (LSYS…PLAQ), 257–295 (ISEK…KAAS), and 331–375 (VHDN…QELG).

The protein belongs to the WD repeat ARPC1 family. In terms of assembly, component of the Arp2/3 complex composed of ARP2, ARP3, ARPC1/p41-ARC, ARPC2/p34-ARC, ARPC3/p21-ARC, ARPC4/p20-ARC and ARPC5/p16-ARC. As to expression, expressed at low levels in all tissues with a relatively highest expression in inflorescences.

It localises to the cytoplasm. It is found in the cytoskeleton. Functions as a component of the Arp2/3 complex which is involved in regulation of actin polymerization and together with an activating nucleation-promoting factor (NPF) mediates the formation of branched actin networks. Arp2/3 complex plays a critical role in the control of cell morphogenesis via the modulation of cell polarity development. This Arabidopsis thaliana (Mouse-ear cress) protein is Actin-related protein 2/3 complex subunit 1A (ARPC1A).